Reading from the N-terminus, the 92-residue chain is Islet amyloid polypeptide (92 aa).

The signal sequence occupies residues 1–22 (MHISKLPAALLIFSVALNHLKA). The propeptide occupies 23–34 (TPVRSGTNHQMD). The cysteines at positions 38 and 43 are disulfide-linked. Residue Y73 is modified to Tyrosine amide. Positions 77-92 (SAAEIPDGDSLDLFLL) are excised as a propeptide.

It belongs to the calcitonin family. Can form homodimers. Interacts with IDE and INS. Interaction with INS inhibits homodimerization and fibril formation.

The protein localises to the secreted. Amylin/IAPP is a glucoregulatory peptide hormone that plays an important role in the regulation of energy homeostasis. Selectively inhibits insulin-stimulated glucose utilization and glycogen deposition in muscle, while not affecting adipocyte glucose metabolism. IAPP function is mediated by the CALCR-RAMPs (AMYRs) receptor complexes. Amylin can also bind CALCR receptor in the absence of RAMPs, although it is more selective for AMYRs. In Mesocricetus auratus (Golden hamster), this protein is Islet amyloid polypeptide (IAPP).